Reading from the N-terminus, the 234-residue chain is MSSSSSSRIHNGEDVYEKAEEYWSRASQDVNGMLGGFEALHAPDISASKRFIEGLKKKNLFGYFDYALDCGAGIGRVTKHLLMPFFSKVDMEDVVEELITKSDQYIGKHPRIGDKFVEGLQTFAPPERRYDLIWIQWVSGHLVDEDLVDFFKRCAKGLKPGGCIVLKDNVTNHEKRLFDDDDHSWTRTEPELLKAFADSQLDMVSKALQTGFPKEIYPVKMYALKPQHTGFTNN.

S-adenosyl-L-methionine is bound by residues glycine 71, arginine 76, 93–95 (DVV), 120–121 (LQ), and glutamine 136.

It belongs to the methyltransferase superfamily. NTM1 family. As to expression, expressed in uterine cells and PVT neurons of the tail. Expressed in pharynx, intestine and DVB tail neuron.

It catalyses the reaction N-terminal L-alanyl-L-prolyl-L-lysyl-[protein] + 3 S-adenosyl-L-methionine = N-terminal N,N,N-trimethyl-L-alanyl-L-prolyl-L-lysyl-[protein] + 3 S-adenosyl-L-homocysteine + 3 H(+). The enzyme catalyses N-terminal L-seryl-L-prolyl-L-lysyl-[protein] + 3 S-adenosyl-L-methionine = N-terminal N,N,N-trimethyl-L-seryl-L-prolyl-L-lysyl-[protein] + 3 S-adenosyl-L-homocysteine + 3 H(+). It carries out the reaction N-terminal L-prolyl-L-prolyl-L-lysyl-[protein] + 2 S-adenosyl-L-methionine = N-terminal N,N-dimethyl-L-prolyl-L-prolyl-L-lysyl-[protein] + 2 S-adenosyl-L-homocysteine + 2 H(+). Functionally, alpha-N-methyltransferase that methylates the N-terminus of target proteins containing the N-terminal motif [Ala/Pro/Ser]-Pro-Lys when the initiator Met is cleaved. Specifically catalyzes mono-, di- or tri-methylation of exposed alpha-amino group of Ala or Ser residue in the [Ala/Ser]-Pro-Lys motif and mono- or di-methylation of Pro in the Pro-Pro-Lys motif. Probably required for the synthesis of neurotransmitter melatonin from serotonin, which plays a role in promoting a sleep-like state, called lethargus, during larval development. The protein is Alpha N-terminal protein methyltransferase 1 of Caenorhabditis elegans.